The following is a 494-amino-acid chain: UPF0371 protein M6_Spy1067 (494 aa).

This sequence belongs to the UPF0371 family.

This is UPF0371 protein M6_Spy1067 from Streptococcus pyogenes serotype M6 (strain ATCC BAA-946 / MGAS10394).